Reading from the N-terminus, the 141-residue chain is Large ribosomal subunit protein uL11 (141 aa).

Belongs to the universal ribosomal protein uL11 family. Part of the ribosomal stalk of the 50S ribosomal subunit. Interacts with L10 and the large rRNA to form the base of the stalk. L10 forms an elongated spine to which L12 dimers bind in a sequential fashion forming a multimeric L10(L12)X complex. Post-translationally, one or more lysine residues are methylated.

Its function is as follows. Forms part of the ribosomal stalk which helps the ribosome interact with GTP-bound translation factors. This Agathobacter rectalis (strain ATCC 33656 / DSM 3377 / JCM 17463 / KCTC 5835 / VPI 0990) (Eubacterium rectale) protein is Large ribosomal subunit protein uL11.